The following is a 645-amino-acid chain: Protein hrpC2 (645 aa).

Helical transmembrane passes span V18–P34, L43–M59, L108–I124, I201–V217, V243–I259, A285–V301, and L308–W324. Residues D334 to R354 form a disordered region.

It belongs to the FHIPEP (flagella/HR/invasion proteins export pore) family.

The protein resides in the cell inner membrane. In terms of biological role, involved in the secretion of a proteinaceous elicitor of the hypersensitivity response in plants. The protein is Protein hrpC2 (hrpC2) of Xanthomonas euvesicatoria.